The chain runs to 148 residues: Putative HTH-type transcriptional regulator NMA1593 (148 aa).

Positions 2–131 (RLTTKGRFAV…GSVTLQSIIE (130 aa)) constitute an HTH rrf2-type domain.

This Neisseria meningitidis serogroup A / serotype 4A (strain DSM 15465 / Z2491) protein is Putative HTH-type transcriptional regulator NMA1593.